We begin with the raw amino-acid sequence, 332 residues long: Malate dehydrogenase, cytoplasmic (332 aa).

Residues 11–17 and D42 each bind NAD(+); that span reads GAAGQIA. Substrate contacts are provided by R92 and R98. Residues N105, Q112, and 129–131 each bind NAD(+); that span reads VGN. N131 and R162 together coordinate substrate. The active-site Proton acceptor is the H187.

It belongs to the LDH/MDH superfamily. MDH type 2 family. Homodimer.

Its subcellular location is the cytoplasm. The catalysed reaction is (S)-malate + NAD(+) = oxaloacetate + NADH + H(+). Its activity is regulated as follows. By arsenate for both the forward and reverse reactions. Its function is as follows. Malate dehydrogenase. Has no activity with NADPH as substrate. Does not show lactate dehydrogenase activity. This Taenia solium (Pork tapeworm) protein is Malate dehydrogenase, cytoplasmic.